Here is a 449-residue protein sequence, read N- to C-terminus: 3-phosphoshikimate 1-carboxyvinyltransferase (449 aa).

The segment at 1–23 is disordered; sequence MSHSASPKPATARRSEALTGEIR. Positions 28, 29, and 33 each coordinate 3-phosphoshikimate. Residue K28 participates in phosphoenolpyruvate binding. Residues G100 and R128 each contribute to the phosphoenolpyruvate site. 3-phosphoshikimate contacts are provided by S173, Q175, D326, and K353. Q175 provides a ligand contact to phosphoenolpyruvate. D326 acts as the Proton acceptor in catalysis. Residues R357 and R402 each contribute to the phosphoenolpyruvate site.

Belongs to the EPSP synthase family. As to quaternary structure, monomer.

It is found in the cytoplasm. The catalysed reaction is 3-phosphoshikimate + phosphoenolpyruvate = 5-O-(1-carboxyvinyl)-3-phosphoshikimate + phosphate. Its pathway is metabolic intermediate biosynthesis; chorismate biosynthesis; chorismate from D-erythrose 4-phosphate and phosphoenolpyruvate: step 6/7. Its function is as follows. Catalyzes the transfer of the enolpyruvyl moiety of phosphoenolpyruvate (PEP) to the 5-hydroxyl of shikimate-3-phosphate (S3P) to produce enolpyruvyl shikimate-3-phosphate and inorganic phosphate. The chain is 3-phosphoshikimate 1-carboxyvinyltransferase from Pseudomonas sp. (strain PG2982).